The primary structure comprises 367 residues: Undecaprenyl-phosphate alpha-N-acetylglucosaminyl 1-phosphate transferase (367 aa).

The next 9 membrane-spanning stretches (helical) occupy residues 3–23, 45–65, 69–89, 129–149, 158–178, 187–207, 213–233, 242–262, and 318–338; these read LLTA…FIFL, GVIP…MFGL, YIPH…VGAM, WELV…WAAI, IDGL…LILW, MWCF…LGIL, VFMG…LLLE, ISPV…VAIM, and VPEW…GYCI.

This sequence belongs to the glycosyltransferase 4 family. WecA subfamily. Mg(2+) serves as cofactor. Mn(2+) is required as a cofactor.

Its subcellular location is the cell inner membrane. The enzyme catalyses di-trans,octa-cis-undecaprenyl phosphate + UDP-N-acetyl-alpha-D-glucosamine = N-acetyl-alpha-D-glucosaminyl-di-trans,octa-cis-undecaprenyl diphosphate + UMP. It participates in bacterial outer membrane biogenesis; LPS O-antigen biosynthesis. It functions in the pathway bacterial outer membrane biogenesis; enterobacterial common antigen biosynthesis. Catalyzes the transfer of the GlcNAc-1-phosphate moiety from UDP-GlcNAc onto the carrier lipid undecaprenyl phosphate (C55-P), yielding GlcNAc-pyrophosphoryl-undecaprenyl (GlcNAc-PP-C55). This Salmonella typhi protein is Undecaprenyl-phosphate alpha-N-acetylglucosaminyl 1-phosphate transferase.